The chain runs to 316 residues: Haloacid dehalogenase-like hydrolase domain-containing protein At4g39970 (316 aa).

The transit peptide at 1–46 directs the protein to the chloroplast; it reads MAVSCNHSAILFSPSSTAGSSSVTSSSSLIGFPRFQTLRFKSRSVY. Aspartate 69 (nucleophile) is an active-site residue. Aspartate 69, aspartate 71, and aspartate 259 together coordinate Mg(2+). Catalysis depends on aspartate 71, which acts as the Proton donor.

It belongs to the HAD-like hydrolase superfamily. DOG/GPP family. It depends on Mg(2+) as a cofactor.

The protein resides in the plastid. The protein localises to the chloroplast. This chain is Haloacid dehalogenase-like hydrolase domain-containing protein At4g39970, found in Arabidopsis thaliana (Mouse-ear cress).